Reading from the N-terminus, the 303-residue chain is N-acetyl-D-glucosamine kinase (303 aa).

ATP contacts are provided by residues 4–11 (GFDIGGTK) and 133–140 (GVGGGLIF). Residues His157, Cys177, Cys179, and Cys184 each coordinate Zn(2+).

Belongs to the ROK (NagC/XylR) family. NagK subfamily.

The catalysed reaction is N-acetyl-D-glucosamine + ATP = N-acetyl-D-glucosamine 6-phosphate + ADP + H(+). Its pathway is cell wall biogenesis; peptidoglycan recycling. In terms of biological role, catalyzes the phosphorylation of N-acetyl-D-glucosamine (GlcNAc) derived from cell-wall degradation, yielding GlcNAc-6-P. This is N-acetyl-D-glucosamine kinase from Escherichia coli O81 (strain ED1a).